Here is a 749-residue protein sequence, read N- to C-terminus: MSESNNMHVSGDGAKQSVYTEKKRVKVYVLENNEWKDTGTGFCQGTVEERTIDDTQTAEKMAYLLVVDEDSDDQVLLKSRLEQNIEYQRQEETLIVWKDLNGQDIALSFEESIGCDSLCEYICFVQKNIESRISLVAVRSTDDGIGSVHEIITGPVNLPSNVPNQTEESLLEALKILNENTSFDYLRNETIQFVINDHYLATLIRSFYQSEESKLYRNLLLLSNIVKTLILFNSKEILEEMINDENFLCVCGILEYDTEFPNSKLNHRQYLKDKEPNFKEMIPISDPTIKLMITQNFRLQFLKDVVLVRFLDDQSFTFISDLMLSYQNSIIDFLQEDSNNFINQVISMYKVEEDSTVTPDKRRDGIKLLHECIQLSQNLNSIEKTLFYKFLIKKGLFQVIQFAFNMETNNDIRILATDIVVGLIEHDIQLIQSVQSDEVTLLNDENSDIDSTDMSLLLILTKILLTDKSPGLKEQSFQALVSLLDPEDYIVDDYQNHDDNIDTRIDNMLQIQNGKNHDGLDGERNHEKFQLAEYLQCFYRQVAPSLFHCFIDGSVNLYECDQQLLIKLVKLLNLMIQGHEASISRRFILENGILIRLISLASSDYILQLRLAAVRCFKNIVFLNDDFYLRYLIGKNLFDPIFEVFKENLNEDNMANSTILDFLKSLNTQLKVVEQEDIPLSGSKSSRNFMLLNKYICGRYGDILLKADYVSFTREMMAIYHEETQKLASLSTTETSFDENDNTTLEVEV.

In terms of assembly, regulatory subunit 3 (R3) of the histone H2A phosphatase complex (HTP-C) consisting of PPH3, PSY2 and PSY4.

The protein localises to the nucleus. Functionally, core regulatory subunit of the histone H2A phosphatase complex, which dephosphorylates H2AS128ph (gamma-H2A) that has been displaced from sites of DNA lesions in the double-stranded DNA break repair process. Dephosphorylation is necessary for efficient recovery from the DNA damage checkpoint. In Kluyveromyces lactis (strain ATCC 8585 / CBS 2359 / DSM 70799 / NBRC 1267 / NRRL Y-1140 / WM37) (Yeast), this protein is Serine/threonine-protein phosphatase 4 regulatory subunit 3 (PSY2).